The chain runs to 1051 residues: DNA-directed RNA polymerase subunit beta (1051 aa).

It belongs to the RNA polymerase beta chain family. As to quaternary structure, in plastids the minimal PEP RNA polymerase catalytic core is composed of four subunits: alpha, beta, beta', and beta''. When a (nuclear-encoded) sigma factor is associated with the core the holoenzyme is formed, which can initiate transcription (Potential).

Its subcellular location is the plastid. It localises to the apicoplast. It catalyses the reaction RNA(n) + a ribonucleoside 5'-triphosphate = RNA(n+1) + diphosphate. Its function is as follows. DNA-dependent RNA polymerase catalyzes the transcription of DNA into RNA using the four ribonucleoside triphosphates as substrates. The sequence is that of DNA-directed RNA polymerase subunit beta (rpoB) from Toxoplasma gondii.